We begin with the raw amino-acid sequence, 378 residues long: MFKPIRKTHPLISIANNALVDLPAPSNISAWWNFGSLLGLCLMLQILTGLFLAMHYAADIETAFNSVNHICRDVNNGWFLRICHANGASFFFACLFIHVGRGVYYESYLYHMTWNTGVIILFLTMATGFLGYVLPWGQMSFWGATVITNLLSAVPYLGMDLVQWIWGGFAVDNATLTRFFTFHFIFPFIILALMMIHLLFLHQTGSNNPLGLNSNVDKIPFHPYFIYKDIFGFIVFLWILVTFIWKFNYLLMDPENFIPANPLVTPVHIQPEWYFLFAYAILRSIPNKLGGVIALVLSIAILLILPFTHSSKFRGLQFYPLNQILFWNMVIVASLLTWIGARPVEDPYILTGQILTVLYFSYFIINPLLAKFWDKLLN.

The next 4 membrane-spanning stretches (helical) occupy residues phenylalanine 34–methionine 54, tryptophan 78–valine 99, tryptophan 114–leucine 134, and phenylalanine 179–leucine 199. Residues histidine 84 and histidine 98 each coordinate heme b. Histidine 183 and histidine 197 together coordinate heme b. Residue histidine 202 participates in a ubiquinone binding. Helical transmembrane passes span tyrosine 227 to phenylalanine 247, leucine 289 to histidine 309, leucine 321 to alanine 341, and tyrosine 348 to leucine 368.

Belongs to the cytochrome b family. As to quaternary structure, the main subunits of complex b-c1 are: cytochrome b, cytochrome c1 and the Rieske protein. Heme b is required as a cofactor.

The protein localises to the mitochondrion inner membrane. Component of the ubiquinol-cytochrome c reductase complex (complex III or cytochrome b-c1 complex) that is part of the mitochondrial respiratory chain. The b-c1 complex mediates electron transfer from ubiquinol to cytochrome c. Contributes to the generation of a proton gradient across the mitochondrial membrane that is then used for ATP synthesis. This is Cytochrome b (mt:Cyt-b) from Anopheles gambiae (African malaria mosquito).